Here is a 422-residue protein sequence, read N- to C-terminus: MAETKDAAQMLVTFKDVAVTFTREEWRQLDLAQRTLYREVMLETCGLLVSLGHRVPKPELVHLLEHGQELWIVKRGLSHATCAGDRAQVHTREPTTYPPVLSERAFLRGSLTLESSTSSDSRLGRARDEEGLLEMQKGKVTPETDLHKETHLGKVSLEGEGLGTDDGLHSRALQEWLSADVLHECDSQQPGKDALIHAGTNPYKCKQCGKGFNRKWYLVRHQRVHTGMKPYECNACGKAFSQSSTLIRHYLIHTGEKPYKCLECGKAFKRRSYLMQHHPIHTGEKPYECSQCRKAFTHRSTFIRHNRTHTGEKPFECKECEKAFSNRAHLIQHYIIHTGEKPYDCMACGKAFRCSSELIQHQRIHTGEKPYECTQCGKAFHRSTYLIQHSVIHTGEMPYKCIECGKAFKRRSHLLQHQRVHT.

One can recognise a KRAB domain in the interval 12 to 83; that stretch reads VTFKDVAVTF…KRGLSHATCA (72 aa). A disordered region spans residues 113–158; sequence LESSTSSDSRLGRARDEEGLLEMQKGKVTPETDLHKETHLGKVSLE. The span at 122–152 shows a compositional bias: basic and acidic residues; it reads RLGRARDEEGLLEMQKGKVTPETDLHKETHL. 8 consecutive C2H2-type zinc fingers follow at residues 203–225, 231–253, 259–281, 287–309, 315–337, 343–365, 371–393, and 399–421; these read YKCKQCGKGFNRKWYLVRHQRVH, YECNACGKAFSQSSTLIRHYLIH, YKCLECGKAFKRRSYLMQHHPIH, YECSQCRKAFTHRSTFIRHNRTH, FECKECEKAFSNRAHLIQHYIIH, YDCMACGKAFRCSSELIQHQRIH, YECTQCGKAFHRSTYLIQHSVIH, and YKCIECGKAFKRRSHLLQHQRVH.

The protein belongs to the krueppel C2H2-type zinc-finger protein family.

The protein localises to the nucleus. In terms of biological role, may be involved in transcriptional regulation. This Homo sapiens (Human) protein is Zinc finger protein 550 (ZNF550).